The following is an 806-amino-acid chain: Volume-regulated anion channel subunit LRRC8E (806 aa).

The Cytoplasmic segment spans residues 1 to 22 (MIPVAEFKQFTEQQPAFKVLKP). The chain crosses the membrane as a helical span at residues 23–43 (WWDVLAEYITYAMLMIGVFGC). The Extracellular portion of the chain corresponds to 44–130 (TLQVTQDKII…YETALHWYAK (87 aa)). Cys54 and Cys311 are joined by a disulfide. Residues Asn57 and Asn80 are each glycosylated (N-linked (GlcNAc...) asparagine). A compositionally biased stretch (polar residues) spans 72-81 (YDQQSPPSND). The interval 72 to 103 (YDQQSPPSNDSDLETTIPPPTATSSPPREMSG) is disordered. A helical transmembrane segment spans residues 131 to 151 (YFPYLVVIHTLIFIICGNFWF). Residues 152–275 (KFPGTSSKIE…MRQTVLKVCK (124 aa)) are Cytoplasmic-facing. Residues 182–213 (EVSGESSQEKPSQERSIDRELSKPNFEEGSPA) form a disordered region. Residues 188 to 207 (SQEKPSQERSIDRELSKPNF) show a composition bias toward basic and acidic residues. Residues 276-296 (FVLITIYNAVLVGKIHFIVPC) form a helical membrane-spanning segment. At 297–323 (SVHTEDMTGYNSFCCNHTKAHLFSKLA) the chain is on the extracellular side. A glycan (N-linked (GlcNAc...) asparagine) is linked at Asn312. Residues 324 to 344 (ITYLCFLGVYGLTCLYTLYWL) traverse the membrane as a helical segment. Residues 345–806 (FRRPLKEYSF…VEVRDKLKED (462 aa)) lie on the Cytoplasmic side of the membrane. LRR repeat units lie at residues 544 to 566 (LKSLKVLTIKSNLSKIPATVADV), 569 to 589 (HLQKFSIHNDGTKLLTLNALK), 593 to 614 (LVKELELVRCELERIPHAVFSL), 616 to 637 (NLQVLDLKENTLHTIEEIISLQ), 641 to 662 (KLSVLRLWHNQIAYIPEHIRKL), 664 to 685 (GLEELSLNRNKILVIPSQLFLC), 687 to 708 (KLRHLDLSNNEIRELPPEIGVL), 710 to 731 (LLQYLGLSGNFLEDLPNELFFC), 733 to 754 (KLKTLKLGQNRLGNLSPKVGSL), and 756 to 777 (CLVKLELKGNRMDTLPPELGNC).

The protein belongs to the LRRC8 family. As to quaternary structure, heterohexamer; oligomerizes with other LRRC8 proteins (lrrc8a, lrrc8c, lrrc8d and/or lrrc8b) to form a heterohexamer. Detected in a channel complex that contains lrrc8a, lrrc8c and lrrc8e. In vivo, the subunit composition may depend primarily on expression levels, and heterooligomeric channels containing various proportions of the different LRRC8 proteins may coexist.

It localises to the cell membrane. Its subcellular location is the endoplasmic reticulum membrane. It is found in the lysosome membrane. It carries out the reaction chloride(in) = chloride(out). The enzyme catalyses iodide(out) = iodide(in). It catalyses the reaction taurine(out) = taurine(in). The catalysed reaction is 2',3'-cGAMP(out) = 2',3'-cGAMP(in). Its function is as follows. Non-essential component of the volume-regulated anion channel (VRAC, also named VSOAC channel), an anion channel required to maintain a constant cell volume in response to extracellular or intracellular osmotic changes. The VRAC channel conducts iodide better than chloride and can also conduct organic osmolytes like taurine. Mediates efflux of amino acids, such as aspartate, in response to osmotic stress. The VRAC channel also mediates transport of immunoreactive cyclic dinucleotide GMP-AMP (2'-3'-cGAMP), an immune messenger produced in response to DNA virus in the cytosol. Channel activity requires lrrc8a plus at least one other family member (lrrc8b, lrrc8c, lrrc8d or lrrc8e); channel characteristics depend on the precise subunit composition. Also plays a role in lysosome homeostasis by forming functional lysosomal VRAC channels in response to low cytoplasmic ionic strength condition: lysosomal VRAC channels are necessary for the formation of large lysosome-derived vacuoles, which store and then expel excess water to maintain cytosolic water homeostasis. This Xenopus tropicalis (Western clawed frog) protein is Volume-regulated anion channel subunit LRRC8E.